We begin with the raw amino-acid sequence, 397 residues long: Tryptophan synthase beta chain (397 aa).

Lysine 87 carries the N6-(pyridoxal phosphate)lysine modification.

Belongs to the TrpB family. Tetramer of two alpha and two beta chains. Pyridoxal 5'-phosphate is required as a cofactor.

The catalysed reaction is (1S,2R)-1-C-(indol-3-yl)glycerol 3-phosphate + L-serine = D-glyceraldehyde 3-phosphate + L-tryptophan + H2O. The protein operates within amino-acid biosynthesis; L-tryptophan biosynthesis; L-tryptophan from chorismate: step 5/5. In terms of biological role, the beta subunit is responsible for the synthesis of L-tryptophan from indole and L-serine. The sequence is that of Tryptophan synthase beta chain from Shigella boydii serotype 18 (strain CDC 3083-94 / BS512).